Reading from the N-terminus, the 456-residue chain is Kynurenine 3-monooxygenase (456 aa).

Belongs to the aromatic-ring hydroxylase family. KMO subfamily. Requires FAD as cofactor.

It catalyses the reaction L-kynurenine + NADPH + O2 + H(+) = 3-hydroxy-L-kynurenine + NADP(+) + H2O. It participates in cofactor biosynthesis; NAD(+) biosynthesis; quinolinate from L-kynurenine: step 1/3. In terms of biological role, catalyzes the hydroxylation of L-kynurenine (L-Kyn) to form 3-hydroxy-L-kynurenine (L-3OHKyn). Required for synthesis of quinolinic acid. The protein is Kynurenine 3-monooxygenase of Xanthomonas campestris pv. campestris (strain B100).